The following is an 80-amino-acid chain: Large ribosomal subunit protein eL13 (80 aa).

The protein belongs to the eukaryotic ribosomal protein eL13 family.

In Aeropyrum pernix (strain ATCC 700893 / DSM 11879 / JCM 9820 / NBRC 100138 / K1), this protein is Large ribosomal subunit protein eL13.